Here is a 416-residue protein sequence, read N- to C-terminus: Polyadenylation and cleavage factor homolog 1 (416 aa).

Residues 1–17 show a composition bias toward polar residues; that stretch reads MASNGSFSAQRNANART. The tract at residues 1-80 is disordered; it reads MASNGSFSAQ…NNNNVSRVSS (80 aa). Residues 70 to 80 show a composition bias toward low complexity; sequence SNNNNVSRVSS. Positions 199–220 form a coiled coil; that stretch reads KELTDLLSLLNNEKEKKTLEAS. The C2H2-type zinc finger occupies 254–276; that stretch reads RQCSSCGLRFKCQEEHSKHMDWH.

As to quaternary structure, forms a complex with cleavage and polyadenylation specificity factor (CPSF) subunits CLPS3, CLPS5, CPSF30, PCFS4, PCFS5, CSTF77 and FIPS3.

It is found in the nucleus. The sequence is that of Polyadenylation and cleavage factor homolog 1 from Arabidopsis thaliana (Mouse-ear cress).